Consider the following 236-residue polypeptide: Small ribosomal subunit protein eS6 (236 aa).

2 positions are modified to phosphoserine: Ser-232 and Ser-233.

This sequence belongs to the eukaryotic ribosomal protein eS6 family. Phosphorylated.

This is Small ribosomal subunit protein eS6 (RPS6) from Eremothecium gossypii (strain ATCC 10895 / CBS 109.51 / FGSC 9923 / NRRL Y-1056) (Yeast).